Here is a 93-residue protein sequence, read N- to C-terminus: Cobalt transport protein CbiN (93 aa).

Transmembrane regions (helical) follow at residues 5–25 (LMLL…NHGG) and 63–83 (LLFT…LGYC).

The protein belongs to the CbiN family. Forms an energy-coupling factor (ECF) transporter complex composed of an ATP-binding protein (A component, CbiO), a transmembrane protein (T component, CbiQ) and 2 possible substrate-capture proteins (S components, CbiM and CbiN) of unknown stoichimetry.

Its subcellular location is the cell inner membrane. It participates in cofactor biosynthesis; adenosylcobalamin biosynthesis. Part of the energy-coupling factor (ECF) transporter complex CbiMNOQ involved in cobalt import. The chain is Cobalt transport protein CbiN from Salmonella arizonae (strain ATCC BAA-731 / CDC346-86 / RSK2980).